The following is a 492-amino-acid chain: Solute carrier family 2, facilitated glucose transporter member 1 (492 aa).

Methionine 1 bears the N-acetylmethionine mark. At methionine 1 to arginine 11 the chain is on the cytoplasmic side. Residues leucine 12–isoleucine 33 form a helical membrane-spanning segment. The Extracellular portion of the chain corresponds to asparagine 34–serine 66. N-linked (GlcNAc...) asparagine glycosylation occurs at asparagine 45. Residues leucine 67–valine 87 form a helical membrane-spanning segment. The Cytoplasmic segment spans residues asparagine 88–phenylalanine 90. A helical transmembrane segment spans residues glycine 91–phenylalanine 112. The Extracellular portion of the chain corresponds to serine 113–glutamate 120. A helical membrane pass occupies residues methionine 121–valine 144. The Cytoplasmic segment spans residues glycine 145–alanine 155. A helical transmembrane segment spans residues leucine 156–leucine 176. A D-glucose-binding site is contributed by glutamine 161. Residues aspartate 177–leucine 185 lie on the Extracellular side of the membrane. Residues tryptophan 186–leucine 206 traverse the membrane as a helical segment. Residues cysteine 207 to proline 271 lie on the Cytoplasmic side of the membrane. Residue serine 226 is modified to Phosphoserine. The helical transmembrane segment at isoleucine 272–tyrosine 293 threads the bilayer. Residues glutamine 282–glutamine 283 and asparagine 288 contribute to the D-glucose site. Over serine 294 to proline 306 the chain is Extracellular. A helical transmembrane segment spans residues valine 307–valine 328. Asparagine 317 contacts D-glucose. The Cytoplasmic segment spans residues glutamate 329–arginine 334. Residues threonine 335–leucine 355 form a helical membrane-spanning segment. Residues alanine 356–serine 365 are Extracellular-facing. The chain crosses the membrane as a helical span at residues tyrosine 366–tryptophan 388. Residues glutamate 380 and tryptophan 388 each coordinate D-glucose. At phenylalanine 389–proline 401 the chain is on the cytoplasmic side. A helical transmembrane segment spans residues alanine 402–phenylalanine 422. The Extracellular segment spans residues glutamine 423–cysteine 429. Residues glycine 430 to phenylalanine 450 traverse the membrane as a helical segment. The Cytoplasmic segment spans residues lysine 451 to valine 492. Position 465 is a phosphoserine (serine 465). Residues arginine 468–valine 492 are disordered. Phosphothreonine is present on threonine 478. A Phosphoserine modification is found at serine 490.

The protein belongs to the major facilitator superfamily. Sugar transporter (TC 2.A.1.1) family. Glucose transporter subfamily. Found in a complex with ADD2, DMTN and SLC2A1. Interacts (via C-terminus cytoplasmic region) with DMTN. Interacts with SNX27; the interaction is required when endocytosed to prevent degradation in lysosomes and promote recycling to the plasma membrane. Interacts with GIPC (via PDZ domain). Interacts with STOM. Interacts with SGTA (via Gln-rich region). Interacts with BSG. Interacts with SMIM43; the interaction may promote SLC2A1-mediated glucose transport to meet the energy needs of mesendoderm differentiation. Post-translationally, phosphorylation at Ser-226 by PKC promotes glucose uptake by increasing cell membrane localization.

It is found in the cell membrane. It localises to the photoreceptor inner segment. It catalyses the reaction D-glucose(out) = D-glucose(in). Its activity is regulated as follows. The uptake of glucose is inhibited by cytochalasin B. Glucose uptake is increased in response to phorbol ester 12-O-tetradecanoylphorbol-13-acetate (TPA) treatment: TPA-induced glucose uptake requires phosphorylation at Ser-226. Functionally, facilitative glucose transporter, which is responsible for constitutive or basal glucose uptake. Has a very broad substrate specificity; can transport a wide range of aldoses including both pentoses and hexoses. Most important energy carrier of the brain: present at the blood-brain barrier and assures the energy-independent, facilitative transport of glucose into the brain. In association with BSG and NXNL1, promotes retinal cone survival by increasing glucose uptake into photoreceptors. Required for mesendoderm differentiation. This is Solute carrier family 2, facilitated glucose transporter member 1 from Oryctolagus cuniculus (Rabbit).